The sequence spans 160 residues: AP-1 complex subunit sigma-2 (160 aa).

Belongs to the adaptor complexes small subunit family. In terms of assembly, adaptor protein complex 1 (AP-1) is a heterotetramer composed of two large adaptins (gamma-type subunit AP1G1 and beta-type subunit AP1B1), a medium adaptin (mu-type subunit AP1M1 or AP1M2) and a small adaptin (sigma-type subunit AP1S1 or AP1S2 or AP1S3). Binds to MUC1. As to expression, widely expressed.

Its subcellular location is the golgi apparatus. The protein resides in the cytoplasmic vesicle membrane. It localises to the membrane. It is found in the clathrin-coated pit. Subunit of clathrin-associated adaptor protein complex 1 that plays a role in protein sorting in the late-Golgi/trans-Golgi network (TGN) and/or endosomes. The AP complexes mediate both the recruitment of clathrin to membranes and the recognition of sorting signals within the cytosolic tails of transmembrane cargo molecules. The chain is AP-1 complex subunit sigma-2 (Ap1s2) from Mus musculus (Mouse).